Consider the following 149-residue polypeptide: Large ribosomal subunit protein uL15C (149 aa).

The tract at residues 21-40 is disordered; it reads RIGKHRKQRGGRGNAGGQHH.

This sequence belongs to the universal ribosomal protein uL15 family. As to quaternary structure, component of the large ribosomal subunit.

Its subcellular location is the cytoplasm. It is found in the cytosol. The protein resides in the endoplasmic reticulum. In terms of biological role, component of the large ribosomal subunit. The ribosome is a large ribonucleoprotein complex responsible for the synthesis of proteins in the cell. The protein is Large ribosomal subunit protein uL15C (rpl27a-3) of Entamoeba histolytica (strain ATCC 30459 / HM-1:IMSS / ABRM).